Consider the following 128-residue polypeptide: UPF0325 protein PMI2289 (128 aa).

The protein belongs to the UPF0325 family.

The polypeptide is UPF0325 protein PMI2289 (Proteus mirabilis (strain HI4320)).